The sequence spans 518 residues: Cytochrome P450 26C1 (518 aa).

Residues 293 to 313 (LLFAAFFTTASASTSLILLLL) traverse the membrane as a helical segment. Cysteine 455 serves as a coordination point for heme.

Belongs to the cytochrome P450 family. Requires heme as cofactor.

It localises to the membrane. The enzyme catalyses an organic molecule + reduced [NADPH--hemoprotein reductase] + O2 = an alcohol + oxidized [NADPH--hemoprotein reductase] + H2O + H(+). It catalyses the reaction all-trans-retinoate + reduced [NADPH--hemoprotein reductase] + O2 = all-trans-4-hydroxyretinoate + oxidized [NADPH--hemoprotein reductase] + H2O + H(+). It carries out the reaction all-trans-4-hydroxyretinoate + reduced [NADPH--hemoprotein reductase] + O2 = all-trans-4-oxoretinoate + oxidized [NADPH--hemoprotein reductase] + 2 H2O + H(+). The catalysed reaction is 9-cis-retinoate + reduced [NADPH--hemoprotein reductase] + O2 = 9-cis-4-hydroxyretinoate + oxidized [NADPH--hemoprotein reductase] + H2O + H(+). The enzyme catalyses 9-cis-4-hydroxyretinoate + reduced [NADPH--hemoprotein reductase] + O2 = 9-cis-4-oxoretinoate + oxidized [NADPH--hemoprotein reductase] + 2 H2O + H(+). It catalyses the reaction all-trans-4-hydroxy-13,14-dihydroretinoate + reduced [NADPH--hemoprotein reductase] + O2 = all-trans-4-oxo-13,14-dihydroretinoate + oxidized [NADPH--hemoprotein reductase] + 2 H2O + H(+). It carries out the reaction all-trans-13,14-dihydroretinoate + reduced [NADPH--hemoprotein reductase] + O2 = all-trans-4-hydroxy-13,14-dihydroretinoate + oxidized [NADPH--hemoprotein reductase] + H2O + H(+). In terms of biological role, a cytochrome P450 monooxygenase involved in the metabolism of retinoates (RAs), the active metabolites of vitamin A, and critical signaling molecules in animals. RAs exist as at least four different isomers: all-trans-RA (atRA), 9-cis-RA, 13-cis-RA, and 9,13-dicis-RA, where atRA is considered to be the biologically active isomer, although 9-cis-RA and 13-cis-RA also have activity. Catalyzes the oxidation of atRA primarily at C-4. Oxidation of atRA limits its biological activity and initiates a degradative process leading to its eventual elimination, thereby contributes to the regulation of atRA homeostasis and signaling. Able to metabolize other RAs such as 9-cis with high efficiency. Can oxidize all-trans-13,14-dihydroretinoate (DRA) to metabolites which could include all-trans-4-oxo-DRA, all-trans-4-hydroxy-DRA, all-trans-5,8-epoxy-DRA, and all-trans-18-hydroxy-DRA. Shares sequence similarity with other CYP26 family members, but has higher affinity to 9-cis-RA and is much less sensitive to the inhibitory effects of ketoconazole. In cooperation with Cyp26a1, contributes to the CNS patterning and the development of regions of higher visual acuity. The sequence is that of Cytochrome P450 26C1 from Mus musculus (Mouse).